The following is a 291-amino-acid chain: ATP synthase gamma chain (291 aa).

The protein belongs to the ATPase gamma chain family. F-type ATPases have 2 components, CF(1) - the catalytic core - and CF(0) - the membrane proton channel. CF(1) has five subunits: alpha(3), beta(3), gamma(1), delta(1), epsilon(1). CF(0) has three main subunits: a, b and c.

Its subcellular location is the cell inner membrane. In terms of biological role, produces ATP from ADP in the presence of a proton gradient across the membrane. The gamma chain is believed to be important in regulating ATPase activity and the flow of protons through the CF(0) complex. In Verminephrobacter eiseniae (strain EF01-2), this protein is ATP synthase gamma chain.